Reading from the N-terminus, the 351-residue chain is Dihydroorotate dehydrogenase (quinone) (351 aa).

FMN-binding positions include 61–65 (AGLDK) and T85. A substrate-binding site is contributed by K65. 110–114 (NRMGF) is a substrate binding site. FMN is bound by residues N139 and N172. Substrate is bound at residue N172. S175 (nucleophile) is an active-site residue. Residue N177 coordinates substrate. Residues K217 and T245 each coordinate FMN. 246–247 (NT) is a substrate binding site. Residues G268, G297, and 318–319 (YS) each bind FMN.

It belongs to the dihydroorotate dehydrogenase family. Type 2 subfamily. In terms of assembly, monomer. The cofactor is FMN.

The protein resides in the cell membrane. It catalyses the reaction (S)-dihydroorotate + a quinone = orotate + a quinol. It functions in the pathway pyrimidine metabolism; UMP biosynthesis via de novo pathway; orotate from (S)-dihydroorotate (quinone route): step 1/1. In terms of biological role, catalyzes the conversion of dihydroorotate to orotate with quinone as electron acceptor. The chain is Dihydroorotate dehydrogenase (quinone) from Xanthomonas euvesicatoria pv. vesicatoria (strain 85-10) (Xanthomonas campestris pv. vesicatoria).